The following is a 496-amino-acid chain: Probable diguanylate cyclase DgcJ (496 aa).

2 helical membrane passes run 11–31 (FIAA…LVAS) and 305–325 (ILYF…TALI). The GGDEF domain occupies 374 to 496 (SSVMFIAIDM…VNKQNKNSRS (123 aa)). Aspartate 382 lines the Mg(2+) pocket. Residues asparagine 390, histidine 395, and aspartate 399 each coordinate substrate. Aspartate 425 contributes to the Mg(2+) binding site. The active-site Proton acceptor is aspartate 425.

In terms of assembly, homodimer. Mg(2+) is required as a cofactor.

It is found in the cell inner membrane. The enzyme catalyses 2 GTP = 3',3'-c-di-GMP + 2 diphosphate. It functions in the pathway purine metabolism; 3',5'-cyclic di-GMP biosynthesis. In terms of biological role, catalyzes the synthesis of cyclic-di-GMP (c-di-GMP) via the condensation of 2 GTP molecules. The polypeptide is Probable diguanylate cyclase DgcJ (Escherichia coli (strain K12)).